The sequence spans 345 residues: Phosphoribosylformylglycinamidine cyclo-ligase (345 aa).

It belongs to the AIR synthase family.

It localises to the cytoplasm. The enzyme catalyses 2-formamido-N(1)-(5-O-phospho-beta-D-ribosyl)acetamidine + ATP = 5-amino-1-(5-phospho-beta-D-ribosyl)imidazole + ADP + phosphate + H(+). It participates in purine metabolism; IMP biosynthesis via de novo pathway; 5-amino-1-(5-phospho-D-ribosyl)imidazole from N(2)-formyl-N(1)-(5-phospho-D-ribosyl)glycinamide: step 2/2. The protein is Phosphoribosylformylglycinamidine cyclo-ligase of Salmonella choleraesuis (strain SC-B67).